Reading from the N-terminus, the 427-residue chain is 3-phosphoshikimate 1-carboxyvinyltransferase (427 aa).

3-phosphoshikimate contacts are provided by Lys-20, Ser-21, and Arg-25. Residue Lys-20 participates in phosphoenolpyruvate binding. Phosphoenolpyruvate is bound by residues Gly-92 and Arg-120. 3-phosphoshikimate-binding residues include Ser-166, Gln-168, Asp-312, and Lys-339. A phosphoenolpyruvate-binding site is contributed by Gln-168. Asp-312 serves as the catalytic Proton acceptor. Phosphoenolpyruvate is bound by residues Arg-343 and Arg-385.

Belongs to the EPSP synthase family. In terms of assembly, monomer.

It is found in the cytoplasm. It carries out the reaction 3-phosphoshikimate + phosphoenolpyruvate = 5-O-(1-carboxyvinyl)-3-phosphoshikimate + phosphate. Its pathway is metabolic intermediate biosynthesis; chorismate biosynthesis; chorismate from D-erythrose 4-phosphate and phosphoenolpyruvate: step 6/7. Catalyzes the transfer of the enolpyruvyl moiety of phosphoenolpyruvate (PEP) to the 5-hydroxyl of shikimate-3-phosphate (S3P) to produce enolpyruvyl shikimate-3-phosphate and inorganic phosphate. The protein is 3-phosphoshikimate 1-carboxyvinyltransferase of Streptococcus agalactiae serotype III (strain NEM316).